A 363-amino-acid chain; its full sequence is Chorismate synthase (363 aa).

The tract at residues 44-63 (DLDRRKPGTSRHTTQRQEPD) is disordered. NADP(+) contacts are provided by R48 and R54. Residues 125-127 (RSS), 237-238 (NA), G277, 292-296 (KATSS), and R318 each bind FMN.

This sequence belongs to the chorismate synthase family. Homotetramer. The cofactor is FMNH2.

The enzyme catalyses 5-O-(1-carboxyvinyl)-3-phosphoshikimate = chorismate + phosphate. It functions in the pathway metabolic intermediate biosynthesis; chorismate biosynthesis; chorismate from D-erythrose 4-phosphate and phosphoenolpyruvate: step 7/7. Its function is as follows. Catalyzes the anti-1,4-elimination of the C-3 phosphate and the C-6 proR hydrogen from 5-enolpyruvylshikimate-3-phosphate (EPSP) to yield chorismate, which is the branch point compound that serves as the starting substrate for the three terminal pathways of aromatic amino acid biosynthesis. This reaction introduces a second double bond into the aromatic ring system. The chain is Chorismate synthase from Pseudomonas fluorescens (strain SBW25).